We begin with the raw amino-acid sequence, 156 residues long: SsrA-binding protein (156 aa).

Belongs to the SmpB family.

It is found in the cytoplasm. Required for rescue of stalled ribosomes mediated by trans-translation. Binds to transfer-messenger RNA (tmRNA), required for stable association of tmRNA with ribosomes. tmRNA and SmpB together mimic tRNA shape, replacing the anticodon stem-loop with SmpB. tmRNA is encoded by the ssrA gene; the 2 termini fold to resemble tRNA(Ala) and it encodes a 'tag peptide', a short internal open reading frame. During trans-translation Ala-aminoacylated tmRNA acts like a tRNA, entering the A-site of stalled ribosomes, displacing the stalled mRNA. The ribosome then switches to translate the ORF on the tmRNA; the nascent peptide is terminated with the 'tag peptide' encoded by the tmRNA and targeted for degradation. The ribosome is freed to recommence translation, which seems to be the essential function of trans-translation. This is SsrA-binding protein from Maricaulis maris (strain MCS10) (Caulobacter maris).